Consider the following 166-residue polypeptide: Lipoprotein signal peptidase (166 aa).

Helical transmembrane passes span 12–32 (WLWL…LILQ), 70–90 (WFFA…MYRA), and 102–122 (ALII…GFVV). Catalysis depends on residues aspartate 123 and aspartate 141. A helical membrane pass occupies residues 142 to 162 (SAICFGAAMIVLEGFLPNAAA).

It belongs to the peptidase A8 family.

Its subcellular location is the cell inner membrane. It catalyses the reaction Release of signal peptides from bacterial membrane prolipoproteins. Hydrolyzes -Xaa-Yaa-Zaa-|-(S,diacylglyceryl)Cys-, in which Xaa is hydrophobic (preferably Leu), and Yaa (Ala or Ser) and Zaa (Gly or Ala) have small, neutral side chains.. It participates in protein modification; lipoprotein biosynthesis (signal peptide cleavage). Its function is as follows. This protein specifically catalyzes the removal of signal peptides from prolipoproteins. This chain is Lipoprotein signal peptidase, found in Enterobacter sp. (strain 638).